The chain runs to 492 residues: MEQKPSKVECGSDPEENSARSPDGKRKRKNGQCPLKSSMSGYIPSYLDKDEQCVVCGDKATGYHYRCITCEGCKGFFRRTIQKNLHPTYSCKYDSCCVIDKITRNQCQLCRFKKCIAVGMAMDLVLDDSKRVAKRKLIEQNRERRRKEEMIRSLQQRPEPTPEEWDLIHVATEAHRSTNAQGSHWKQRRKFLPDDIGQSPIVSMPDGDKVDLEAFSEFTKIITPAITRVVDFAKKLPMFSELPCEDQIILLKGCCMEIMSLRAAVRYDPESDTLTLSGEMAVKREQLKNGGLGVVSDAIFELGKSLSAFNLDDTEVALLQAVLLMSTDRSGLLCVDKIEKSQEAYLLAFEHYVNHRKHNIPHFWPKLLMKEREVQSSILYKGAAAEGRPGGSLGVHPEGQQLLGMHVVQGPQVRQLEQQFGEAGSLRGPVLQHQSPKSPQQRLLELLHRSGILHSRAVCGEDDSSEASSLSSSSSDEDTEVFEDLAGKAASP.

The segment at 1–33 is disordered; that stretch reads MEQKPSKVECGSDPEENSARSPDGKRKRKNGQC. Positions 1–52 are modulating; the sequence is MEQKPSKVECGSDPEENSARSPDGKRKRKNGQCPLKSSMSGYIPSYLDKDEQ. Positions 53, 56, 70, 73, 91, 97, 107, and 110 each coordinate Zn(2+). 2 NR C4-type zinc fingers span residues 53 to 73 and 91 to 115; these read CVVCGDKATGYHYRCITCEGC and CKYDSCCVIDKITRNQCQLCRFKKC. The nuclear receptor DNA-binding region spans 53–127; sequence CVVCGDKATG…VGMAMDLVLD (75 aa). An NR LBD domain is found at 163–407; it reads EEWDLIHVAT…EGQQLLGMHV (245 aa). Residues Arg228 and Ser277 each coordinate 3,3',5-triiodo-L-thyronine. The tract at residues 457 to 492 is disordered; sequence AVCGEDDSSEASSLSSSSSDEDTEVFEDLAGKAASP.

Belongs to the nuclear hormone receptor family. NR1 subfamily. As to quaternary structure, binds DNA as a dimer; homodimer and heterodimer with RXRB. Interacts with NCOA3 and NCOA6 coactivators, leading to a strong increase of transcription of target genes. Probably interacts with SFPQ. Interacts with C1D. Interacts with AKAP13. Interacts with TP53INP2. Interacts with PER2. Isoform alpha-2 and isoform alpha-1 interact with TACC1, but the interaction with alpha-1 is weaker. The interaction with isoform alpha-1, but not alpha-2, is decreased in the presence of thyroid hormone T3.

It localises to the nucleus. The protein resides in the cytoplasm. Nuclear hormone receptor that can act as a repressor or activator of transcription. High affinity receptor for thyroid hormones, including triiodothyronine and thyroxine. The sequence is that of Thyroid hormone receptor alpha (Thra) from Rattus norvegicus (Rat).